Reading from the N-terminus, the 389-residue chain is Alkanesulfonate monooxygenase (389 aa).

It belongs to the SsuD family.

It catalyses the reaction an alkanesulfonate + FMNH2 + O2 = an aldehyde + FMN + sulfite + H2O + 2 H(+). Its function is as follows. Catalyzes the desulfonation of aliphatic sulfonates. The protein is Alkanesulfonate monooxygenase of Variovorax paradoxus (strain S110).